The primary structure comprises 168 residues: Dihydrofolate reductase (168 aa).

One can recognise a DHFR domain in the interval 1–159 (MISFIFAMDA…YDYEFLMYEK (159 aa)). A substrate-binding site is contributed by 5–7 (IFA). Residues 6–7 (FA) and 14–19 (IGKDND) each bind NADP(+). Aspartate 27 contributes to the substrate binding site. Position 43–46 (43–46 (GRKT)) interacts with NADP(+). A substrate-binding site is contributed by arginine 57. Residues 62 to 65 (VTSA) and 95 to 100 (IGGAQL) each bind NADP(+). Residue threonine 114 coordinates substrate.

It belongs to the dihydrofolate reductase family.

The catalysed reaction is (6S)-5,6,7,8-tetrahydrofolate + NADP(+) = 7,8-dihydrofolate + NADPH + H(+). The protein operates within cofactor biosynthesis; tetrahydrofolate biosynthesis; 5,6,7,8-tetrahydrofolate from 7,8-dihydrofolate: step 1/1. Functionally, key enzyme in folate metabolism. Catalyzes an essential reaction for de novo glycine and purine synthesis, and for DNA precursor synthesis. The chain is Dihydrofolate reductase (dfrA) from Bacillus subtilis (strain 168).